A 177-amino-acid chain; its full sequence is Large ribosomal subunit protein bL17 (177 aa).

Residues 136–177 (AEEEAPAVEAEATEAVEAPVEETAAAEAEAPAEEAADAEKAE) are disordered. Acidic residues predominate over residues 138–149 (EEAPAVEAEATE). Residues 150 to 164 (AVEAPVEETAAAEAE) show a composition bias toward low complexity.

This sequence belongs to the bacterial ribosomal protein bL17 family. Part of the 50S ribosomal subunit. Contacts protein L32.

The protein is Large ribosomal subunit protein bL17 of Bifidobacterium longum (strain NCC 2705).